The primary structure comprises 908 residues: Metabotropic glutamate receptor 8 (908 aa).

The signal sequence occupies residues 1-33 (MVCEGKRLASCPCFFLLTAKFYWILTMMQRTHS). The Extracellular segment spans residues 34–583 (QEYAHSIRVD…IIKLEWHSPW (550 aa)). Cys-64 and Cys-106 are oxidised to a cystine. A glycan (N-linked (GlcNAc...) asparagine) is linked at Asn-95. L-glutamate is bound by residues Ser-156, 177–179 (AST), and Tyr-227. 7 cysteine pairs are disulfide-bonded: Cys-246–Cys-534, Cys-369–Cys-384, Cys-424–Cys-431, Cys-516–Cys-535, Cys-520–Cys-538, Cys-541–Cys-553, and Cys-556–Cys-569. Residue Asn-298 is glycosylated (N-linked (GlcNAc...) asparagine). Asp-309 provides a ligand contact to L-glutamate. Lys-401 serves as a coordination point for L-glutamate. Residues Asn-452 and Asn-480 are each glycosylated (N-linked (GlcNAc...) asparagine). Asn-565 carries N-linked (GlcNAc...) asparagine glycosylation. The helical transmembrane segment at 584 to 608 (AVVPVFIAILGIIATTFVIVTFVRY) threads the bilayer. Residues 609 to 620 (NDTPIVRASGRE) lie on the Cytoplasmic side of the membrane. The chain crosses the membrane as a helical span at residues 621–641 (LSYVLLTGIFLCYSITFLMIA). Over 642-647 (APDTII) the chain is Extracellular. A helical transmembrane segment spans residues 648–668 (CSFRRIFLGLGMCFSYAALLT). At 669–695 (KTNRIHRIFEQGKKSVTAPKFISPASQ) the chain is on the cytoplasmic side. Residues 696–716 (LVITFSLISVQLLGVFVWFVV) form a helical membrane-spanning segment. At 717–746 (DPPHTIIDYGEQRTLDPENARGVLKCDISD) the chain is on the extracellular side. The helical transmembrane segment at 747-768 (LSLICSLGYSILLMVTCTVYAI) threads the bilayer. Residues 769–781 (KTRGVPETFNEAK) lie on the Cytoplasmic side of the membrane. A helical membrane pass occupies residues 782-803 (PIGFTMYTTCIIWLAFIPIFFG). Residues 804–818 (TAQSAEKMYIQTTTL) lie on the Extracellular side of the membrane. The helical transmembrane segment at 819–843 (TVSMSLSASVSLGMLYMPKVYIIIF) threads the bilayer. Residues 844–908 (HPEQNVQKRK…TYISYSNHSI (65 aa)) lie on the Cytoplasmic side of the membrane. Residue Lys-882 forms a Glycyl lysine isopeptide (Lys-Gly) (interchain with G-Cter in SUMO1) linkage.

Belongs to the G-protein coupled receptor 3 family. Interacts with PICK1. As to expression, prominent expression in olfactory bulb, pontine gray, lateral reticular nucleus of the thalamus, and piriform cortex. Less abundant expression incerebral cortex, hippocampus, cerebellum, and mammillary body.

It is found in the cell membrane. Its function is as follows. G-protein coupled receptor for glutamate. Ligand binding causes a conformation change that triggers signaling via guanine nucleotide-binding proteins (G proteins) and modulates the activity of down-stream effectors. Signaling inhibits adenylate cyclase activity. This chain is Metabotropic glutamate receptor 8 (Grm8), found in Rattus norvegicus (Rat).